The primary structure comprises 778 residues: Lon protease (778 aa).

Positions 6-207 constitute a Lon N-terminal domain; sequence LPLMALRDMV…TVISTLTSNI (202 aa). 356–363 lines the ATP pocket; the sequence is GPPGVGKT. In terms of domain architecture, Lon proteolytic spans 592–773; the sequence is EDQIGSTTGL…DQVLKHALVE (182 aa). Catalysis depends on residues serine 679 and lysine 722.

The protein belongs to the peptidase S16 family. As to quaternary structure, homohexamer. Organized in a ring with a central cavity.

It localises to the cytoplasm. The catalysed reaction is Hydrolysis of proteins in presence of ATP.. Its function is as follows. ATP-dependent serine protease that mediates the selective degradation of mutant and abnormal proteins as well as certain short-lived regulatory proteins. Required for cellular homeostasis and for survival from DNA damage and developmental changes induced by stress. Degrades polypeptides processively to yield small peptide fragments that are 5 to 10 amino acids long. Binds to DNA in a double-stranded, site-specific manner. This is Lon protease from Rickettsia felis (strain ATCC VR-1525 / URRWXCal2) (Rickettsia azadi).